The sequence spans 111 residues: Ig kappa chain V-III region CBPC 101 (111 aa).

The tract at residues 1-23 (DIVLTQSPASLAVSLGQRATISC) is framework-1. Cys23 and Cys92 are joined by a disulfide. The tract at residues 24 to 38 (KASQSVDYTGESYMN) is complementarity-determining-1. The interval 39-53 (WYQQNPGQSPKLLIY) is framework-2. The segment at 54 to 60 (AASNLES) is complementarity-determining-2. The segment at 61–92 (GIPARFSGSGSGTDFTLNIHPVEEEDAATYYC) is framework-3. The segment at 93 to 101 (QQSNEDPYT) is complementarity-determining-3. A framework-4 region spans residues 102–111 (FGGGTKLEIK).

The sequence is that of Ig kappa chain V-III region CBPC 101 from Mus musculus (Mouse).